A 550-amino-acid polypeptide reads, in one-letter code: Acetyl-coenzyme A transporter 1 (550 aa).

The Cytoplasmic segment spans residues 1-74 (MSPTISHKDN…KRSYRAELSS (74 aa)). At Ser-42 the chain carries Phosphoserine. Residues 75-95 (ILLLLFLYVLQGIPLGLAGSI) form a helical membrane-spanning segment. Topologically, residues 96–113 (PLILQSKNVSYTDQAFFS) are extracellular. Asn-103 is a glycosylation site (N-linked (GlcNAc...) asparagine). Residues 114–134 (FVFWPFSLKLLWAPLVDAVYF) traverse the membrane as a helical segment. Over 135-141 (KNFGRRK) the chain is Cytoplasmic. The helical transmembrane segment at 142-162 (SWLVPTQYILGIFMIYLSTQV) threads the bilayer. Residues 163–256 (DRLLGNIDGR…FQPQPRGIVT (94 aa)) lie on the Extracellular side of the membrane. The helical transmembrane segment at 257-277 (LSDFLFFWGTVFLITTTLVAL) threads the bilayer. Over 278-300 (LKKETREASVVKEETQGITDTYK) the chain is Cytoplasmic. The chain crosses the membrane as a helical span at residues 301–321 (LLFSIIKMPAVLAFCLLILTS). The Extracellular portion of the chain corresponds to 322-344 (KIGFSAADAVTGLKLVEEGVPKE). The chain crosses the membrane as a helical span at residues 345 to 365 (HLALLAVPMVPLQIILPLLIS). The Cytoplasmic segment spans residues 366 to 375 (KYTAGPQPLN). The helical transmembrane segment at 376-396 (IFYKAMPYRLLLGLEYALLVW) threads the bilayer. At 397 to 405 (WTPKVEHQG) the chain is on the extracellular side. Residues 406–426 (GFPIYYYIIVLLSYALHQVTL) form a helical membrane-spanning segment. The Cytoplasmic portion of the chain corresponds to 427–509 (YSMYVSIMAF…LGGSCVTALD (83 aa)). Residues 510 to 530 (GYYVESIVCVLIGFGWWFFLG) traverse the membrane as a helical segment. The Extracellular segment spans residues 531–550 (PKFKKLQDEGPSSWKCKRTN).

The protein belongs to the SLC33A transporter family. Homodimerizes. Expressed in brain at all developmental stages. Detected in hippocampus, hypothalamus, cerebellum, cortex, olfactory bulb, and the ventral and dorsal anterior olfactory nucleus.

The protein resides in the endoplasmic reticulum membrane. It catalyses the reaction acetyl-CoA(in) = acetyl-CoA(out). Its function is as follows. Acetyl-CoA transporter that mediates active acetyl-CoA import through the endoplasmic reticulum (ER) membrane into the ER lumen where specific ER-based acetyl-CoA:lysine acetyltransferases are responsible for the acetylation of ER-based protein substrates, such as BACE1. Necessary for O-acetylation of gangliosides. The polypeptide is Acetyl-coenzyme A transporter 1 (Slc33a1) (Rattus norvegicus (Rat)).